A 108-amino-acid polypeptide reads, in one-letter code: ATP-dependent Clp protease adapter protein ClpS (108 aa).

It belongs to the ClpS family. As to quaternary structure, binds to the N-terminal domain of the chaperone ClpA.

In terms of biological role, involved in the modulation of the specificity of the ClpAP-mediated ATP-dependent protein degradation. The protein is ATP-dependent Clp protease adapter protein ClpS of Leptospira borgpetersenii serovar Hardjo-bovis (strain JB197).